A 293-amino-acid chain; its full sequence is 4-hydroxybenzoate octaprenyltransferase (293 aa).

The next 8 membrane-spanning stretches (helical) occupy residues 41–61 (FAAA…LGVI), 98–118 (TEAK…DLLL), 122–142 (TFLL…MKRF), 145–165 (LPQV…YGAV), 167–187 (ESLP…TVAY), 218–238 (IIAL…WISQ), 241–261 (WGYF…CWLT), and 272–292 (AFLN…VGIY).

Belongs to the UbiA prenyltransferase family. It depends on Mg(2+) as a cofactor.

Its subcellular location is the cell inner membrane. It catalyses the reaction all-trans-octaprenyl diphosphate + 4-hydroxybenzoate = 4-hydroxy-3-(all-trans-octaprenyl)benzoate + diphosphate. It participates in cofactor biosynthesis; ubiquinone biosynthesis. Its function is as follows. Catalyzes the prenylation of para-hydroxybenzoate (PHB) with an all-trans polyprenyl group. Mediates the second step in the final reaction sequence of ubiquinone-8 (UQ-8) biosynthesis, which is the condensation of the polyisoprenoid side chain with PHB, generating the first membrane-bound Q intermediate 3-octaprenyl-4-hydroxybenzoate. In Actinobacillus pleuropneumoniae serotype 5b (strain L20), this protein is 4-hydroxybenzoate octaprenyltransferase.